A 2919-amino-acid chain; its full sequence is Cadherin EGF LAG seven-pass G-type receptor 2 (2919 aa).

An N-terminal signal peptide occupies residues 1-31 (MRSRAASAPLPTPLLPLLLLLLLLPPSPLLG). Topologically, residues 32 to 2380 (DQVGPCRSLG…GEILPLKTLT (2349 aa)) are extracellular. Residues 156-194 (LRAGEGSPEESLGGRRKRNVNTAPQFQPPSYQATVPENQ) are disordered. Residues 175 to 194 (VNTAPQFQPPSYQATVPENQ) show a composition bias toward polar residues. Cadherin domains follow at residues 182-289 (QPPS…DPVF), 290-399 (EQQE…APQF), 400-505 (SEKR…APIF), 506-610 (VSTP…NPTF), 611-712 (TQPE…RPVF), 713-815 (QSSH…APQF), 816-921 (LRDS…PPVF), 922-1023 (EQDE…PPVL), and 1028-1146 (ILFN…SPLL). Residues asparagine 486, asparagine 557, and asparagine 701 are each glycosylated (N-linked (GlcNAc...) asparagine). N-linked (GlcNAc...) asparagine glycans are attached at residues asparagine 1036, asparagine 1076, asparagine 1182, and asparagine 1212. The region spanning 1228–1286 (DDNICLREPCENYMRCVSVLRFDSSAPFIASSSVLFRPIHPVGGLRCRCPPGFTGDYCE) is the EGF-like 1; atypical domain. The region spanning 1288–1318 (EVDLCYSRPCGPHGRCRSREGGYTCLCLDGY) is the EGF-like 2; calcium-binding domain. Disulfide bonds link cysteine 1292/cysteine 1303, cysteine 1297/cysteine 1312, cysteine 1314/cysteine 1323, cysteine 1332/cysteine 1343, cysteine 1337/cysteine 1353, and cysteine 1355/cysteine 1365. The region spanning 1328–1366 (HSGRCTPGVCKNGGTCVNLLVGGFKCDCPSGDFEKPFCQ) is the EGF-like 3; calcium-binding domain. In terms of domain architecture, Laminin G-like 1 spans 1367–1571 (VTTRSFPARS…IANNGTVPGC (205 aa)). N-linked (GlcNAc...) asparagine glycans are attached at residues asparagine 1501 and asparagine 1565. 4 disulfides stabilise this stretch: cysteine 1545-cysteine 1571, cysteine 1578-cysteine 1589, cysteine 1583-cysteine 1598, and cysteine 1600-cysteine 1609. The EGF-like 4; calcium-binding domain occupies 1574–1610 (KKIVCDSSICHNGGTCVNQWNAFSCECPLGFGGKSCA). Asparagine 1591 carries the post-translational modification (3R)-3-hydroxyasparagine. The Laminin G-like 2 domain maps to 1614–1791 (ANPQRFLGSS…GESINVEPGC (178 aa)). N-linked (GlcNAc...) asparagine glycosylation occurs at asparagine 1741. An EGF-like 5; calcium-binding domain is found at 1787 to 1829 (VEPGCSWPDPCDSNPCPTNSYCSNDWDSYSCSCVLGYYGDNCT). 13 disulfides stabilise this stretch: cysteine 1791/cysteine 1802, cysteine 1797/cysteine 1817, cysteine 1819/cysteine 1828, cysteine 1832/cysteine 1843, cysteine 1837/cysteine 1855, cysteine 1857/cysteine 1866, cysteine 1887/cysteine 1899, cysteine 1889/cysteine 1906, cysteine 1908/cysteine 1921, cysteine 1924/cysteine 1936, cysteine 1926/cysteine 1943, cysteine 1945/cysteine 1954, and cysteine 1957/cysteine 1969. An N-linked (GlcNAc...) asparagine glycan is attached at asparagine 1827. In terms of domain architecture, EGF-like 6; calcium-binding spans 1830 to 1867 (NVCDLNPCEHQSVCTRKPNTPHGYICECLPNYLGPYCE). Residues 1883 to 1922 (TCGPCNCDVSKGFDPDCNKTSGECHCKENHYRPPGSPTCL) enclose the EGF-like 7; calcium-binding domain. Asparagine 1900 carries an N-linked (GlcNAc...) asparagine glycan. The region spanning 1924–1971 (CDCYPTGSLSRVCDPEDGQCPCKPGVIGRQCDRCDNPFAEVTTNGCEV) is the Laminin EGF-like domain. N-linked (GlcNAc...) asparagine glycosylation is found at asparagine 2024, asparagine 2043, and asparagine 2061. Residues 2199–2369 (ETTVILPESV…AVLMDMSRRE (171 aa)) enclose the GAIN-B domain. Residues 2216–2241 (VRSAGPGEAQETEELARRQRRHPELS) are disordered. Disulfide bonds link cysteine 2319–cysteine 2351 and cysteine 2339–cysteine 2353. The interval 2319-2369 (CVFWNHSILVSGTGGWSARGCEVVFRNESHVSCQCNHMTSFAVLMDMSRRE) is GPS. Asparagine 2323 and asparagine 2345 each carry an N-linked (GlcNAc...) asparagine glycan. A helical transmembrane segment spans residues 2381–2401 (YVALGVTLAALMLTFLFLTLL). At 2402–2413 (RALRSNQHGIRR) the chain is on the cytoplasmic side. A helical transmembrane segment spans residues 2414 to 2433 (NLTAALGLAQLVFLLGINQA). The Extracellular segment spans residues 2434–2438 (DLPFA). A helical membrane pass occupies residues 2439-2459 (CTVIAILLHFLYLCTFSWALL). Over 2460–2480 (EALHLYRALTEVRDVNASPMR) the chain is Cytoplasmic. A helical membrane pass occupies residues 2481-2501 (FYYMLGWGVPAFITGLAVGLD). At 2502–2518 (PEGYGNPDFCWLSVYDT) the chain is on the extracellular side. The helical transmembrane segment at 2519-2539 (LIWSFAGPVAFAVSMSVFLYI) threads the bilayer. The Cytoplasmic portion of the chain corresponds to 2540–2563 (LSARASCAAQRQGFEKKGPVSGLR). Residues 2564-2584 (SSFTVLLLLSATWLLALLSVN) form a helical membrane-spanning segment. Over 2585 to 2591 (SDTLLFH) the chain is Extracellular. A helical membrane pass occupies residues 2592-2612 (YLFAACNCVQGPFIFLSYVVL). Over 2613–2919 (SKEVRKALKF…SEFLFFNFLH (307 aa)) the chain is Cytoplasmic. The disordered stretch occupies residues 2690-2884 (LNPGQVPPGL…PPRPPPRQSL (195 aa)). Acidic residues predominate over residues 2718-2730 (TDSDSDLSLEDDQ). The segment covering 2791–2800 (GTTTKENSGS) has biased composition (polar residues). Residues 2803–2815 (LEERPRENGDALT) show a composition bias toward basic and acidic residues. Low complexity predominate over residues 2857–2868 (GTGSSRGSSISE).

It belongs to the G-protein coupled receptor 2 family. LN-TM7 subfamily. Heterodimer of 2 chains generated by proteolytic processing; the large extracellular N-terminal fragment and the membrane-bound C-terminal fragment predominantly remain associated and non-covalently linked. Post-translationally, the iron and 2-oxoglutarate dependent 3-hydroxylation of aspartate and asparagine is (R) stereospecific within EGF domains. Autoproteolytically processed at the GPS region of the GAIN-B domain; this cleavage modulates receptor activity. As to expression, expressed in the CNS and in the eye.

It is found in the cell membrane. In terms of biological role, receptor that may have an important role in cell/cell signaling during nervous system formation. This Mus musculus (Mouse) protein is Cadherin EGF LAG seven-pass G-type receptor 2.